The primary structure comprises 130 residues: Fluoride-specific ion channel FluC (130 aa).

Helical transmembrane passes span 2–22 (GLLL…RFAL), 35–55 (IGIL…AAFL), 72–92 (LFVT…LDIL), and 107–127 (ILVS…FIMG). Na(+) is bound by residues G79 and T82.

It belongs to the fluoride channel Fluc/FEX (TC 1.A.43) family.

It is found in the cell inner membrane. The catalysed reaction is fluoride(in) = fluoride(out). Na(+) is not transported, but it plays an essential structural role and its presence is essential for fluoride channel function. In terms of biological role, fluoride-specific ion channel. Important for reducing fluoride concentration in the cell, thus reducing its toxicity. The chain is Fluoride-specific ion channel FluC from Francisella philomiragia subsp. philomiragia (strain ATCC 25017 / CCUG 19701 / FSC 153 / O#319-036).